Here is a 125-residue protein sequence, read N- to C-terminus: Holo-[acyl-carrier-protein] synthase (125 aa).

Residues aspartate 8 and glutamate 57 each coordinate Mg(2+).

The protein belongs to the P-Pant transferase superfamily. AcpS family. Mg(2+) is required as a cofactor.

Its subcellular location is the cytoplasm. It carries out the reaction apo-[ACP] + CoA = holo-[ACP] + adenosine 3',5'-bisphosphate + H(+). Its function is as follows. Transfers the 4'-phosphopantetheine moiety from coenzyme A to a Ser of acyl-carrier-protein. This is Holo-[acyl-carrier-protein] synthase from Neisseria meningitidis serogroup A / serotype 4A (strain DSM 15465 / Z2491).